The chain runs to 81 residues: Cytochrome b559 subunit alpha (81 aa).

A helical membrane pass occupies residues 21 to 35 (VIHSITIPMLFIAGW). His-23 lines the heme pocket.

It belongs to the PsbE/PsbF family. In terms of assembly, heterodimer of an alpha subunit and a beta subunit. PSII is composed of 1 copy each of membrane proteins PsbA, PsbB, PsbC, PsbD, PsbE, PsbF, PsbH, PsbI, PsbJ, PsbK, PsbL, PsbM, PsbT, PsbX, PsbY, PsbZ, Psb30/Ycf12, peripheral proteins PsbO, CyanoQ (PsbQ), PsbU, PsbV and a large number of cofactors. It forms dimeric complexes. Heme b serves as cofactor.

The protein localises to the cellular thylakoid membrane. This b-type cytochrome is tightly associated with the reaction center of photosystem II (PSII). PSII is a light-driven water:plastoquinone oxidoreductase that uses light energy to abstract electrons from H(2)O, generating O(2) and a proton gradient subsequently used for ATP formation. It consists of a core antenna complex that captures photons, and an electron transfer chain that converts photonic excitation into a charge separation. The sequence is that of Cytochrome b559 subunit alpha from Crocosphaera subtropica (strain ATCC 51142 / BH68) (Cyanothece sp. (strain ATCC 51142)).